Consider the following 616-residue polypeptide: Chaperone protein HscA (616 aa).

The protein belongs to the heat shock protein 70 family.

Functionally, chaperone involved in the maturation of iron-sulfur cluster-containing proteins. Has a low intrinsic ATPase activity which is markedly stimulated by HscB. Involved in the maturation of IscU. This chain is Chaperone protein HscA, found in Escherichia coli O7:K1 (strain IAI39 / ExPEC).